Reading from the N-terminus, the 122-residue chain is UPF0102 protein RHE_CH00320 (122 aa).

Belongs to the UPF0102 family.

This chain is UPF0102 protein RHE_CH00320, found in Rhizobium etli (strain ATCC 51251 / DSM 11541 / JCM 21823 / NBRC 15573 / CFN 42).